The chain runs to 198 residues: Peptidyl-tRNA hydrolase (198 aa).

Residue Tyr-16 participates in tRNA binding. His-21 functions as the Proton acceptor in the catalytic mechanism. Tyr-67, Asn-69, and Asn-115 together coordinate tRNA.

The protein belongs to the PTH family. As to quaternary structure, monomer.

It is found in the cytoplasm. It catalyses the reaction an N-acyl-L-alpha-aminoacyl-tRNA + H2O = an N-acyl-L-amino acid + a tRNA + H(+). Hydrolyzes ribosome-free peptidyl-tRNAs (with 1 or more amino acids incorporated), which drop off the ribosome during protein synthesis, or as a result of ribosome stalling. Functionally, catalyzes the release of premature peptidyl moieties from peptidyl-tRNA molecules trapped in stalled 50S ribosomal subunits, and thus maintains levels of free tRNAs and 50S ribosomes. This Gloeobacter violaceus (strain ATCC 29082 / PCC 7421) protein is Peptidyl-tRNA hydrolase.